We begin with the raw amino-acid sequence, 284 residues long: Bifunctional protein FolD (284 aa).

Residues 165-167 (GRS), Ser-190, and Ile-231 contribute to the NADP(+) site.

This sequence belongs to the tetrahydrofolate dehydrogenase/cyclohydrolase family. Homodimer.

It carries out the reaction (6R)-5,10-methylene-5,6,7,8-tetrahydrofolate + NADP(+) = (6R)-5,10-methenyltetrahydrofolate + NADPH. The enzyme catalyses (6R)-5,10-methenyltetrahydrofolate + H2O = (6R)-10-formyltetrahydrofolate + H(+). The protein operates within one-carbon metabolism; tetrahydrofolate interconversion. Functionally, catalyzes the oxidation of 5,10-methylenetetrahydrofolate to 5,10-methenyltetrahydrofolate and then the hydrolysis of 5,10-methenyltetrahydrofolate to 10-formyltetrahydrofolate. The sequence is that of Bifunctional protein FolD from Streptococcus thermophilus (strain ATCC BAA-491 / LMD-9).